Consider the following 219-residue polypeptide: Small ribosomal subunit protein uS3 (219 aa).

Residues 38-106 (IRTYLKKKLY…KLNLEIKEIK (69 aa)) enclose the KH type-2 domain.

Belongs to the universal ribosomal protein uS3 family. As to quaternary structure, part of the 30S ribosomal subunit. Forms a tight complex with proteins S10 and S14.

Binds the lower part of the 30S subunit head. Binds mRNA in the 70S ribosome, positioning it for translation. The polypeptide is Small ribosomal subunit protein uS3 (Lachnoclostridium phytofermentans (strain ATCC 700394 / DSM 18823 / ISDg) (Clostridium phytofermentans)).